A 428-amino-acid polypeptide reads, in one-letter code: Cysteine--tRNA ligase (428 aa).

Zn(2+) is bound at residue Cys23. The 'HIGH' region motif lies at 25 to 35 (PTVYNDLHLGN). Zn(2+) is bound by residues Cys196, His221, and Glu225. The short motif at 253-257 (KMSKS) is the 'KMSKS' region element. Lys256 contributes to the ATP binding site.

The protein belongs to the class-I aminoacyl-tRNA synthetase family. In terms of assembly, monomer. The cofactor is Zn(2+).

It localises to the cytoplasm. It carries out the reaction tRNA(Cys) + L-cysteine + ATP = L-cysteinyl-tRNA(Cys) + AMP + diphosphate. The chain is Cysteine--tRNA ligase (cysS) from Mycoplasma genitalium (strain ATCC 33530 / DSM 19775 / NCTC 10195 / G37) (Mycoplasmoides genitalium).